Here is an 859-residue protein sequence, read N- to C-terminus: Probable helicase A859L (859 aa).

The Helicase ATP-binding domain maps to 178–349 (YQELQRSGRA…KNRDLFGGVA (172 aa)). Residue 191–198 (MACRCGKT) coordinates ATP. Positions 298–301 (DECH) match the DEAH box motif. One can recognise a Helicase C-terminal domain in the interval 394 to 553 (QIIMALAYLK…RFYEHLLNPS (160 aa)).

Belongs to the asfivirus helicase A859L family.

The polypeptide is Probable helicase A859L (Ornithodoros (relapsing fever ticks)).